We begin with the raw amino-acid sequence, 306 residues long: D-alanine--D-alanine ligase (306 aa).

The region spanning Lys105–Glu300 is the ATP-grasp domain. Thr131 to Thr186 lines the ATP pocket. Mg(2+) is bound by residues Asp254, Glu267, and Asn269.

Belongs to the D-alanine--D-alanine ligase family. Mg(2+) is required as a cofactor. The cofactor is Mn(2+).

It is found in the cytoplasm. The enzyme catalyses 2 D-alanine + ATP = D-alanyl-D-alanine + ADP + phosphate + H(+). It functions in the pathway cell wall biogenesis; peptidoglycan biosynthesis. Cell wall formation. This Nitrosomonas eutropha (strain DSM 101675 / C91 / Nm57) protein is D-alanine--D-alanine ligase.